The chain runs to 973 residues: Short transient receptor potential channel 5 (973 aa).

At 1-325 (MAQLYYKKVN…YDGFPGWRRK (325 aa)) the chain is on the cytoplasmic side. ANK repeat units lie at residues 30–60 (SAEEKAFLNAVEKGDYATVKQALQEAEIYYN), 69–97 (LGRSALLIAIENENLEIMELLLNHSVYVG), 98–124 (DALLYAIRKEVVGAVELLLSYRRPSGE), and 141–170 (PDITPIMLAAHTNNYEIIKLLVQKRVTIPR). Residues histidine 172, cysteine 176, cysteine 178, and cysteine 181 each contribute to the Zn(2+) site. Residues 326 to 360 (HWVVKLLTCMTIGFLFPMLSIAYLISPRSNLGLFI) constitute an intramembrane region (discontinuously helical). Residues 361–363 (KKP) are Cytoplasmic-facing. The chain crosses the membrane as a helical span at residues 364 to 384 (FIKFICHTASYLTFLFMLLLA). Topologically, residues 385 to 404 (SQHIVRTDLHVQGPPPTVVE) are extracellular. A helical membrane pass occupies residues 405 to 419 (WMILPWVLGFIWGEI). Glutamate 418, glutamate 421, asparagine 436, and aspartate 439 together coordinate Ca(2+). The Cytoplasmic portion of the chain corresponds to 420–433 (KEMWDGGFTEYIHD). Residues 434–454 (WWNLMDFAMNSLYLATISLKI) traverse the membrane as a helical segment. The Extracellular portion of the chain corresponds to 455-476 (VAYVKYNGSRPREEWEMWHPTL). Residue asparagine 461 is glycosylated (N-linked (GlcNAc...) asparagine). The helical transmembrane segment at 477–497 (IAEALFAISNILSSLRLISLF) threads the bilayer. The Cytoplasmic segment spans residues 498 to 512 (TANSHLGPLQISLGR). The helical transmembrane segment at 513–535 (MLLDILKFLFIYCLVLLAFANGL) threads the bilayer. Residues 536–603 (NQLYFYYETR…HEFTEFVGAT (68 aa)) lie on the Extracellular side of the membrane. An intrachain disulfide couples cysteine 553 to cysteine 558. Residues 604 to 624 (MFGTYNVISLVVLLNMLIAMM) traverse the membrane as a helical segment. Residues 625-973 (NNSYQLIADH…GQEEQVTTRL (349 aa)) lie on the Cytoplasmic side of the membrane. Disordered stretches follow at residues 766-794 (HPRSFSTSSTELSQRDDNNDGSGGARAKS) and 810-837 (GPPLIRTMPRSSGAQGKSKAESSSKRSF). An essential for binding to NHERF1 PDZ domain region spans residues 971–973 (TRL).

The protein belongs to the transient receptor (TC 1.A.4) family. STrpC subfamily. TRPC5 sub-subfamily. Homotetramer. Heterotetramer with TRPC1 and/or TRPC4. Each subunit in the homomeric ion channel (via ANK repeats) interacts with one copy of GTP-bound GNAI3; the interaction is direct and activates the ion channel. Interacts with TRPC4AP. Interacts with NHERF1. Interacts with MX1 and RNF24. Interacts (via C-terminus) with CABP1. Interacts with SESTD1 (via the spectrin 1 repeat). Interacts with PLSCR1. Interacts with PKD2L2. As to expression, expressed in brain with higher levels in fetal brain. Found in cerebellum and occipital pole.

It is found in the cell membrane. The catalysed reaction is Ca(2+)(in) = Ca(2+)(out). With respect to regulation, activated by G-protein coupled receptors via direct interaction with GTP-bound GNAI3, which increases the channel sensitivity to phosphatidylinositol bisphosphate. May be activated by intracellular calcium store depletion. Calcium channel activity is enhanced by MYLK, that promotes its subcellular localization at the plasma membrane. In terms of biological role, forms a receptor-activated non-selective calcium permeant cation channel. Mediates calcium-dependent phosphatidylserine externalization and apoptosis in neurons via its association with PLSCR1. Acts on distinct neuronal populations in the hypothalamus to regulate innate behaviors including feeding, anxiety (flight/fight/fear), socialization, and maternal care. This is Short transient receptor potential channel 5 (TRPC5) from Homo sapiens (Human).